A 744-amino-acid chain; its full sequence is FHF complex subunit HOOK-interacting protein 2B (744 aa).

Disordered stretches follow at residues 184 to 213 and 510 to 530; these read KTAR…LNRD and LDSG…SSDG. Basic and acidic residues predominate over residues 197 to 213; it reads AGYRDKDCPHSDALNRD.

This sequence belongs to the FHIP family. Expressed in colon.

In terms of biological role, able to activate MAPK/ERK and TGFB signaling pathways. May regulate the activity of genes involved in intestinal barrier function and immunoprotective inflammation. May play a role in cell proliferation. The chain is FHF complex subunit HOOK-interacting protein 2B from Mus musculus (Mouse).